The primary structure comprises 64 residues: Large ribosomal subunit protein bL33c (64 aa).

This sequence belongs to the bacterial ribosomal protein bL33 family.

The protein resides in the plastid. It is found in the chloroplast. In Cyanidium caldarium (Red alga), this protein is Large ribosomal subunit protein bL33c (rpl33).